Reading from the N-terminus, the 261-residue chain is Histone H1-I (261 aa).

Low complexity predominate over residues 1–22 (MSETEAAPVVAPAAEAAPAAEA). Disordered regions lie at residues 1–63 (MSET…PPYI) and 125–261 (FKLS…KGKK). Over residues 41–50 (APKEPKAPKE) the composition is skewed to basic and acidic residues. Positions 58–129 (THPPYIEMVK…KVKGSFKLSE (72 aa)) constitute an H15 domain. Basic residues predominate over residues 133 to 142 (AKAKKSTPKK). 2 consecutive repeat copies span residues 136 to 140 (KKSTP) and 188 to 192 (KKATP). The interval 136–250 (KKSTPKKAKA…KKAPAKKSTP (115 aa)) is 7 X 5 AA repeats of K-K-[AS]-T-P. Residues 139 to 142 (TPKK) mediate DNA binding. The segment covering 143–198 (AKADGEAKPKKSEAKPKKAEAVKKTKAPKEKVERPKKEKKEKVEKKKATPKAEKPK) has biased composition (basic and acidic residues). Residues 199–203 (KAATP) form a 3; approximate repeat. Repeat copies occupy residues 209–213 (KKATP), 230–234 (KKATP), 236–240 (KKAAP), and 246–250 (KKSTP). The span at 227 to 250 (AKPKKATPSKKAAPKKAPAKKSTP) shows a compositional bias: basic residues. Over residues 251–261 (KAKEAKSKGKK) the composition is skewed to basic and acidic residues.

The protein belongs to the histone H1/H5 family.

Its subcellular location is the nucleus. It is found in the chromosome. Histones H1 are necessary for the condensation of nucleosome chains into higher-order structures. The protein is Histone H1-I (H1-I) of Volvox carteri (Green alga).